We begin with the raw amino-acid sequence, 80 residues long: Kappa-actitoxin-Avd4i (80 aa).

A signal peptide spans 1–19; the sequence is MNKALFLCLVVLCAAVVFA. A propeptide spanning residues 20-31 is cleaved from the precursor; the sequence is AEDLQKAKHAPF. 3 disulfide bridges follow: cysteine 41–cysteine 76, cysteine 43–cysteine 69, and cysteine 59–cysteine 77.

The protein belongs to the sea anemone type 3 (BDS) potassium channel toxin family. As to expression, weakly expressed in the ectodermal tissue from the distal and proximal tentacles, body wall, and oral disk.

It localises to the secreted. The protein resides in the nematocyst. Functionally, blocks Kv3 voltage-gated potassium channels. Reduces blood pressure. This is Kappa-actitoxin-Avd4i from Anemonia viridis (Snakelocks anemone).